The sequence spans 575 residues: MSNGQLIYLMVAIAVILVLAYVVAIFLRKRNEGRLEALEERKEELYNLPVNDEVEAVKNMHLIGQSQVAFREWNQKWVDLSLNSFADIENNLFEAEGYNHSFRFLKASHQIDQIESQITLIDEDIAAIRNALADLEKQESKNSGRVLHALDLFEELQHRVAENSEQYGQALDEIEKQLENIQSEFSQFVTLNSSGDPVEAAVILDNTENHILALSHIVDRVPALVTTLSTELPDQLQDLESGYRKLIDANYHFVETDIEARFHLLYEAFKKNQENIRQLELDNAEYENGQAQEEINALYDIFTREIAAQKVVENLLATLPTYLQHMKENNTLLGEDIARLNKTYLLPETAASHVRRIQTELESFEAAIVEVTSNQEEPTQAYSVLEENLEDLQTQLKDIEDEQISVSERLTQIEKDDINARQKANVYVNRLHTIKRYMEKRNLPGIPQTFLKLFFTASNNTEDLMVELEQKMINIESVTRVLEIATNDMEALETETYNIVQYATLTEQLLQYSNRYRSFDERIQEAFNEALDIFEKEFDYHASFDKISQALEVAEPGVTNRFVTSYEKTRETIRF.

The Extracellular portion of the chain corresponds to 1–8 (MSNGQLIY). Residues 9–27 (LMVAIAVILVLAYVVAIFL) form a helical membrane-spanning segment. Over 28 to 575 (RKRNEGRLEA…YEKTRETIRF (548 aa)) the chain is Cytoplasmic. Coiled-coil stretches lie at residues 110 to 191 (QIDQ…FVTL), 265 to 301 (LYEA…LYDI), 354 to 416 (VRRI…IEKD), and 456 to 526 (TASN…IQEA).

The protein belongs to the EzrA family.

The protein resides in the cell membrane. Functionally, negative regulator of FtsZ ring formation; modulates the frequency and position of FtsZ ring formation. Inhibits FtsZ ring formation at polar sites. Interacts either with FtsZ or with one of its binding partners to promote depolymerization. The chain is Septation ring formation regulator EzrA from Streptococcus pneumoniae (strain JJA).